Here is a 319-residue protein sequence, read N- to C-terminus: Chromoplast-specific carotenoid-associated protein C2, chromoplastic (319 aa).

Residues 1-55 constitute a chromoplast transit peptide; it reads MTSIAFCNAFTVNPFLAAARRSPPPLTPLTSVALSPARKPRILAIFHPRTFPSFR.

This sequence belongs to the PAP/fibrillin family.

It is found in the plastid. The protein localises to the chromoplast. Its function is as follows. May be involved in carotenoid sequestration within chromoplasts. The protein is Chromoplast-specific carotenoid-associated protein C2, chromoplastic (CHRC2) of Oncidium hybrid cultivar (Orchid).